The sequence spans 112 residues: Small ribosomal subunit protein bS6 (112 aa).

The protein belongs to the bacterial ribosomal protein bS6 family.

Functionally, binds together with bS18 to 16S ribosomal RNA. In Hyphomonas neptunium (strain ATCC 15444), this protein is Small ribosomal subunit protein bS6.